The sequence spans 354 residues: UDP-3-O-acylglucosamine N-acyltransferase (354 aa).

His-257 (proton acceptor) is an active-site residue. The tract at residues 335–354 (AQQVSKSKLRGRNPGGKQND) is disordered.

It belongs to the transferase hexapeptide repeat family. LpxD subfamily. Homotrimer.

The enzyme catalyses a UDP-3-O-[(3R)-3-hydroxyacyl]-alpha-D-glucosamine + a (3R)-hydroxyacyl-[ACP] = a UDP-2-N,3-O-bis[(3R)-3-hydroxyacyl]-alpha-D-glucosamine + holo-[ACP] + H(+). Its pathway is bacterial outer membrane biogenesis; LPS lipid A biosynthesis. Catalyzes the N-acylation of UDP-3-O-acylglucosamine using 3-hydroxyacyl-ACP as the acyl donor. Is involved in the biosynthesis of lipid A, a phosphorylated glycolipid that anchors the lipopolysaccharide to the outer membrane of the cell. In Rhizobium etli (strain ATCC 51251 / DSM 11541 / JCM 21823 / NBRC 15573 / CFN 42), this protein is UDP-3-O-acylglucosamine N-acyltransferase.